Consider the following 156-residue polypeptide: Succinate dehydrogenase assembly factor 2-B, mitochondrial (156 aa).

The N-terminal 24 residues, 1–24, are a transit peptide targeting the mitochondrion; that stretch reads MLRQFIISRVGRRLQLPMITQSRL.

It belongs to the SDHAF2 family. As to quaternary structure, interacts with the flavoprotein subunit within the SDH catalytic dimer.

The protein localises to the mitochondrion matrix. In terms of biological role, plays an essential role in the assembly of succinate dehydrogenase (SDH), an enzyme complex (also referred to as respiratory complex II) that is a component of both the tricarboxylic acid (TCA) cycle and the mitochondrial electron transport chain, and which couples the oxidation of succinate to fumarate with the reduction of ubiquinone (coenzyme Q) to ubiquinol. Required for flavinylation (covalent attachment of FAD) of the flavoprotein subunit of the SDH catalytic dimer. The protein is Succinate dehydrogenase assembly factor 2-B, mitochondrial of Drosophila sechellia (Fruit fly).